The following is a 93-amino-acid chain: Pyrimidine/purine nucleoside phosphorylase (93 aa).

The protein belongs to the nucleoside phosphorylase PpnP family.

The catalysed reaction is a purine D-ribonucleoside + phosphate = a purine nucleobase + alpha-D-ribose 1-phosphate. The enzyme catalyses adenosine + phosphate = alpha-D-ribose 1-phosphate + adenine. It catalyses the reaction cytidine + phosphate = cytosine + alpha-D-ribose 1-phosphate. It carries out the reaction guanosine + phosphate = alpha-D-ribose 1-phosphate + guanine. The catalysed reaction is inosine + phosphate = alpha-D-ribose 1-phosphate + hypoxanthine. The enzyme catalyses thymidine + phosphate = 2-deoxy-alpha-D-ribose 1-phosphate + thymine. It catalyses the reaction uridine + phosphate = alpha-D-ribose 1-phosphate + uracil. It carries out the reaction xanthosine + phosphate = alpha-D-ribose 1-phosphate + xanthine. Its function is as follows. Catalyzes the phosphorolysis of diverse nucleosides, yielding D-ribose 1-phosphate and the respective free bases. Can use uridine, adenosine, guanosine, cytidine, thymidine, inosine and xanthosine as substrates. Also catalyzes the reverse reactions. In Shewanella pealeana (strain ATCC 700345 / ANG-SQ1), this protein is Pyrimidine/purine nucleoside phosphorylase.